A 333-amino-acid chain; its full sequence is GDP-fucose transporter 1 (333 aa).

The next 8 helical transmembrane spans lie at 13–33, 45–65, 95–115, 139–159, 169–189, 211–231, 239–259, and 293–313; these read SIKI…MVFL, APMF…FILG, LVFV…GVAF, TSMP…VGVN, MAGI…AIYI, AIFL…IAAS, YWFL…VSML, and TATW…YVLV.

The protein belongs to the TPT transporter family. SLC35C subfamily.

The protein localises to the golgi apparatus membrane. The enzyme catalyses GMP(out) + GDP-beta-L-fucose(in) = GMP(in) + GDP-beta-L-fucose(out). In terms of biological role, antiporter specific for GDP-l-fucose and depending on the concomitant reverse transport of GMP. Involved in GDP-fucose import from the cytoplasm into the Golgi lumen. In Monosiga brevicollis (Choanoflagellate), this protein is GDP-fucose transporter 1 (slc35c1).